The chain runs to 156 residues: ATP synthase subunit b (156 aa).

A helical transmembrane segment spans residues 12-32 (VAFFIFVLFCMKYVWPPVIAA).

This sequence belongs to the ATPase B chain family. F-type ATPases have 2 components, F(1) - the catalytic core - and F(0) - the membrane proton channel. F(1) has five subunits: alpha(3), beta(3), gamma(1), delta(1), epsilon(1). F(0) has three main subunits: a(1), b(2) and c(10-14). The alpha and beta chains form an alternating ring which encloses part of the gamma chain. F(1) is attached to F(0) by a central stalk formed by the gamma and epsilon chains, while a peripheral stalk is formed by the delta and b chains.

The protein localises to the cell inner membrane. F(1)F(0) ATP synthase produces ATP from ADP in the presence of a proton or sodium gradient. F-type ATPases consist of two structural domains, F(1) containing the extramembraneous catalytic core and F(0) containing the membrane proton channel, linked together by a central stalk and a peripheral stalk. During catalysis, ATP synthesis in the catalytic domain of F(1) is coupled via a rotary mechanism of the central stalk subunits to proton translocation. Functionally, component of the F(0) channel, it forms part of the peripheral stalk, linking F(1) to F(0). The polypeptide is ATP synthase subunit b (Pseudomonas syringae pv. tomato (strain ATCC BAA-871 / DC3000)).